A 442-amino-acid polypeptide reads, in one-letter code: Cyclic AMP receptor-like protein B (442 aa).

Topologically, residues Met-1–His-16 are extracellular. Residues Leu-17–Ile-37 traverse the membrane as a helical segment. At Thr-38–Tyr-219 the chain is on the cytoplasmic side. The interval Tyr-83–Ile-166 is disordered. Low complexity predominate over residues Gln-91–Gln-103. A compositionally biased stretch (polar residues) spans Ile-112 to Tyr-122. Residues Ser-123–Ser-144 show a composition bias toward low complexity. A compositionally biased stretch (polar residues) spans Tyr-145–Ile-166. The chain crosses the membrane as a helical span at residues Leu-220–Phe-240. The Extracellular portion of the chain corresponds to Asn-241 to Arg-255. Residues Val-256 to Leu-276 traverse the membrane as a helical segment. Over Leu-277–Arg-289 the chain is Cytoplasmic. Residues Phe-290–Phe-310 traverse the membrane as a helical segment. Residues Ser-311–Leu-334 lie on the Extracellular side of the membrane. A helical membrane pass occupies residues Tyr-335–Ile-355. The Cytoplasmic segment spans residues Tyr-356 to Ser-382. The chain crosses the membrane as a helical span at residues Phe-383–Leu-403. At Tyr-404–Pro-410 the chain is on the extracellular side. The chain crosses the membrane as a helical span at residues Phe-411–Ala-431. Over Tyr-432 to Lys-442 the chain is Cytoplasmic.

Belongs to the G-protein coupled receptor 5 family.

Its subcellular location is the membrane. Its function is as follows. Receptor for cAMP. The chain is Cyclic AMP receptor-like protein B (crlB) from Dictyostelium discoideum (Social amoeba).